A 197-amino-acid chain; its full sequence is ATP-dependent Clp protease proteolytic subunit 1 (197 aa).

Ser88 (nucleophile) is an active-site residue. The active site involves His113.

It belongs to the peptidase S14 family. In terms of assembly, fourteen ClpP subunits assemble into 2 heptameric rings which stack back to back to give a disk-like structure with a central cavity, resembling the structure of eukaryotic proteasomes.

It localises to the cytoplasm. It carries out the reaction Hydrolysis of proteins to small peptides in the presence of ATP and magnesium. alpha-casein is the usual test substrate. In the absence of ATP, only oligopeptides shorter than five residues are hydrolyzed (such as succinyl-Leu-Tyr-|-NHMec, and Leu-Tyr-Leu-|-Tyr-Trp, in which cleavage of the -Tyr-|-Leu- and -Tyr-|-Trp bonds also occurs).. Its function is as follows. Cleaves peptides in various proteins in a process that requires ATP hydrolysis. Has a chymotrypsin-like activity. Plays a major role in the degradation of misfolded proteins. This is ATP-dependent Clp protease proteolytic subunit 1 from Leifsonia xyli subsp. xyli (strain CTCB07).